Reading from the N-terminus, the 643-residue chain is Phosphomethylpyrimidine synthase (643 aa).

Substrate-binding positions include Asn248, Met277, Tyr306, His342, 362 to 364 (SRG), 403 to 406 (DGLR), and Glu442. His446 provides a ligand contact to Zn(2+). A substrate-binding site is contributed by Tyr469. His510 is a binding site for Zn(2+). [4Fe-4S] cluster is bound by residues Cys590, Cys593, and Cys598.

It belongs to the ThiC family. Homodimer. [4Fe-4S] cluster serves as cofactor.

It carries out the reaction 5-amino-1-(5-phospho-beta-D-ribosyl)imidazole + S-adenosyl-L-methionine = 4-amino-2-methyl-5-(phosphooxymethyl)pyrimidine + CO + 5'-deoxyadenosine + formate + L-methionine + 3 H(+). The protein operates within cofactor biosynthesis; thiamine diphosphate biosynthesis. Its function is as follows. Catalyzes the synthesis of the hydroxymethylpyrimidine phosphate (HMP-P) moiety of thiamine from aminoimidazole ribotide (AIR) in a radical S-adenosyl-L-methionine (SAM)-dependent reaction. The chain is Phosphomethylpyrimidine synthase from Burkholderia orbicola (strain MC0-3).